The chain runs to 697 residues: Long-chain-fatty-acid--CoA ligase 6 (697 aa).

The chain crosses the membrane as a helical; Signal-anchor for type III membrane protein span at residues 25–45; that stretch reads LSATTLVSVGALAAVLAYWLT. The Cytoplasmic portion of the chain corresponds to 46–697; it reads HRPKALQPPC…QIEELYLVSV (652 aa).

The protein belongs to the ATP-dependent AMP-binding enzyme family. It depends on Mg(2+) as a cofactor.

The protein localises to the mitochondrion outer membrane. Its subcellular location is the peroxisome membrane. It localises to the microsome membrane. The protein resides in the endoplasmic reticulum membrane. It catalyses the reaction a long-chain fatty acid + ATP + CoA = a long-chain fatty acyl-CoA + AMP + diphosphate. The enzyme catalyses (5Z,8Z,11Z,14Z)-eicosatetraenoate + ATP + CoA = (5Z,8Z,11Z,14Z)-eicosatetraenoyl-CoA + AMP + diphosphate. It carries out the reaction 15-hydroxy-(5Z,8Z,11Z,13E)-eicosatetraenoate + ATP + CoA = 15-hydroxy-(5Z,8Z,11Z,13E)-eicosatetraenoyl-CoA + AMP + diphosphate. The catalysed reaction is 12-hydroxy-(5Z,8Z,10E,14Z)-eicosatetraenoate + ATP + CoA = 12-hydroxy-(5Z,8Z,10E,14Z)-eicosatetraenoyl-CoA + AMP + diphosphate. It catalyses the reaction 5-hydroxy-(6E,8Z,11Z,14Z)-eicosatetraenoate + ATP + CoA = 5-hydroxy-(6E,8Z,11Z,14Z)-eicosatetraenoyl-CoA + AMP + diphosphate. The enzyme catalyses hexadecanoate + ATP + CoA = hexadecanoyl-CoA + AMP + diphosphate. It carries out the reaction (E)-hexadec-2-enoate + ATP + CoA = (2E)-hexadecenoyl-CoA + AMP + diphosphate. In terms of biological role, catalyzes the conversion of long-chain fatty acids to their active form acyl-CoA for both synthesis of cellular lipids, and degradation via beta-oxidation. Plays an important role in fatty acid metabolism in brain and the acyl-CoAs produced may be utilized exclusively for the synthesis of the brain lipid. The polypeptide is Long-chain-fatty-acid--CoA ligase 6 (Acsl6) (Mus musculus (Mouse)).